Reading from the N-terminus, the 132-residue chain is Outer membrane protein RomA (132 aa).

To M.tuberculosis Rv0906.

It localises to the cell outer membrane. The polypeptide is Outer membrane protein RomA (romA) (Klebsiella pneumoniae).